A 1021-amino-acid polypeptide reads, in one-letter code: Sodium/potassium-transporting ATPase subunit alpha-1 (1021 aa).

A propeptide spanning residues 1 to 5 (MGKGV) is cleaved from the precursor. Over residues 1 to 11 (MGKGVGRDKYE) the composition is skewed to basic and acidic residues. A disordered region spans residues 1-36 (MGKGVGRDKYEPAAVSEHGDKKKAKKERDMDELKKE). At 6-85 (GRDKYEPAAV…NALTPPPTTP (80 aa)) the chain is on the cytoplasmic side. An N6-acetyllysine modification is found at Lys-9. Phosphotyrosine is present on Tyr-10. Ser-16 carries the post-translational modification Phosphoserine; by PKC. At Lys-21 the chain carries N6-acetyllysine. Residues 26-36 (KERDMDELKKE) show a composition bias toward basic and acidic residues. 2 positions are modified to phosphoserine: Ser-38 and Ser-45. The interval 80–82 (PPP) is phosphoinositide-3 kinase binding. A helical transmembrane segment spans residues 86–106 (EWVKFCRQLFGGFSMLLWIGA). At 107–129 (VLCFLAYGIQAATEEEPQNDNLY) the chain is on the extracellular side. A helical membrane pass occupies residues 130 to 150 (LGVVLSAVVIITGCFSYYQEA). Over 151–286 (KSSKIMESFK…GGQTPIAAEI (136 aa)) the chain is Cytoplasmic. Phosphoserine is present on Ser-226. Tyr-258 is subject to Phosphotyrosine. A helical transmembrane segment spans residues 287 to 306 (EHFIHIITGVAVFLGVSFFI). Residues 307 to 318 (LSLILEYTWLEA) are Extracellular-facing. The helical transmembrane segment at 319-336 (VIFLIGIIVANVPEGLLA) threads the bilayer. Residues 337–770 (TVTVCLTLTA…EEGRLIFDNL (434 aa)) are Cytoplasmic-facing. Residue Asp-374 is the 4-aspartylphosphate intermediate of the active site. Ser-450 and Ser-482 each carry phosphoserine. Lys-485 provides a ligand contact to ATP. A Phosphotyrosine modification is found at Tyr-540. Residues 594–715 (RAAVPDAVGK…QGAIVAVTGD (122 aa)) form a mediates interaction with SCN7A region. Ser-666 is modified (phosphoserine). Residues Asp-715 and Asp-719 each coordinate Mg(2+). Residues 771 to 790 (KKSIAYTLTSNIPEITPFLI) form a helical membrane-spanning segment. Residues 791–800 (FIIANIPLPL) lie on the Extracellular side of the membrane. A helical transmembrane segment spans residues 801–821 (GTVTILCIDLGTDMVPAISLA). At 822-841 (YEQAESDIMKRQPRNPQTDK) the chain is on the cytoplasmic side. The chain crosses the membrane as a helical span at residues 842–864 (LVNERLISMAYGQIGMIQALGGF). Residues 865 to 916 (FTYFVIMAENGFLPNHLLGIRVTWDDRWINDVEDSYGQQWTYEQRKIVEFTC) lie on the Extracellular side of the membrane. Residues 917–936 (HTAFFVSIVVVQWADLVICK) form a helical membrane-spanning segment. Residues 937–949 (TRRNSVFQQGMKN) lie on the Cytoplasmic side of the membrane. The residue at position 941 (Ser-941) is a Phosphoserine; by PKA. A helical membrane pass occupies residues 950–968 (KILIFGLFEETALAAFLSY). Residues 969–983 (CPGMGVALRMYPLKP) lie on the Extracellular side of the membrane. The helical transmembrane segment at 984 to 1004 (TWWFCAFPYSLLIFVYDEVRK) threads the bilayer. Over 1005–1021 (LIIRRRPGGWVEKETYY) the chain is Cytoplasmic.

This sequence belongs to the cation transport ATPase (P-type) (TC 3.A.3) family. Type IIC subfamily. In terms of assembly, the sodium/potassium-transporting ATPase is composed of a catalytic alpha subunit, an auxiliary non-catalytic beta subunit and an additional regulatory subunit. Interacts with regulatory subunit FXYD1. Interacts with regulatory subunit FXYD3. Interacts with SIK1. Interacts with SLC35G1 and STIM1. Interacts with CLN3; this interaction regulates the sodium/potassium-transporting ATPase complex localization at the plasma membrane. Interacts with SCN7A; activates ATP1A1 P-type sodium:potassium-exchanging transporter activity which indirectly signals to nearby neurons to regulate sodium homeostasis. Phosphorylation on Tyr-10 modulates pumping activity. Phosphorylation of Ser-941 by PKA modulates the response of ATP1A1 to PKC. Dephosphorylation by protein phosphatase 2A (PP2A) following increases in intracellular sodium, leading to increase catalytic activity.

The protein localises to the cell membrane. It is found in the basolateral cell membrane. It localises to the sarcolemma. The protein resides in the cell projection. Its subcellular location is the axon. The protein localises to the melanosome. It catalyses the reaction K(+)(out) + Na(+)(in) + ATP + H2O = K(+)(in) + Na(+)(out) + ADP + phosphate + H(+). Specifically inhibited by cardiac glycosides such as digoxin or ouabain. Its function is as follows. This is the catalytic component of the active enzyme, which catalyzes the hydrolysis of ATP coupled with the exchange of sodium and potassium ions across the plasma membrane. This action creates the electrochemical gradient of sodium and potassium ions, providing the energy for active transport of various nutrients. Could also be part of an osmosensory signaling pathway that senses body-fluid sodium levels and controls salt intake behavior as well as voluntary water intake to regulate sodium homeostasis. This chain is Sodium/potassium-transporting ATPase subunit alpha-1 (ATP1A1), found in Ovis aries (Sheep).